The primary structure comprises 158 residues: Transcription elongation factor GreA (158 aa).

A coiled-coil region spans residues 45-72 (AEYHAAREQQSFIEGRIKQLEGELSHAE).

Belongs to the GreA/GreB family.

Necessary for efficient RNA polymerase transcription elongation past template-encoded arresting sites. The arresting sites in DNA have the property of trapping a certain fraction of elongating RNA polymerases that pass through, resulting in locked ternary complexes. Cleavage of the nascent transcript by cleavage factors such as GreA or GreB allows the resumption of elongation from the new 3'terminus. GreA releases sequences of 2 to 3 nucleotides. This is Transcription elongation factor GreA from Xylella fastidiosa (strain M23).